The sequence spans 352 residues: Ion-translocating oxidoreductase complex subunit D (352 aa).

The next 4 membrane-spanning stretches (helical) occupy residues 20–40, 42–62, 69–91, and 123–143; these read IMLL…WFFG, GTLF…AIVL, VASH…SIPP, and PAMI…TSWL. An FMN phosphoryl threonine modification is found at Thr187. 5 helical membrane-spanning segments follow: residues 215 to 235, 242 to 262, 267 to 287, 301 to 321, and 322 to 342; these read LAGV…VFLL, WHIP…GWLF, LASP…FFIL, LIFG…GGYP, and DGVA…DYYT.

It belongs to the NqrB/RnfD family. As to quaternary structure, the complex is composed of six subunits: RsxA, RsxB, RsxC, RsxD, RsxE and RsxG. It depends on FMN as a cofactor.

It is found in the cell inner membrane. Functionally, part of a membrane-bound complex that couples electron transfer with translocation of ions across the membrane. Required to maintain the reduced state of SoxR. This chain is Ion-translocating oxidoreductase complex subunit D, found in Salmonella agona (strain SL483).